We begin with the raw amino-acid sequence, 574 residues long: Transmembrane protein 108 (574 aa).

A helical transmembrane segment spans residues 9-29; that stretch reads YCQLLSFLLTLALTKALVLAV. An interaction with SH3GL2 region spans residues 31-169; that stretch reads EPSPRESLQT…ATTRRPPRPP (139 aa). Disordered stretches follow at residues 32-352 and 364-417; these read PSPR…SGVF and DATV…PRPL. The segment covering 58 to 86 has biased composition (polar residues); it reads TRLSSVLTLNPTPDGPSSQAAATLETTVS. Residues 132–160 show a composition bias toward low complexity; that stretch reads LPPGDATPTTTLPTKPAGTTSRPTVAPRA. The segment at 173–406 is interaction with DST (isoform 1); the sequence is RKGAGGSTRT…SPAEEEAEAS (234 aa). A compositionally biased stretch (polar residues) spans 245-271; it reads FSSTQPQTVSPATAPRSTSRVPPTTSL. Positions 292 to 312 are enriched in low complexity; it reads TSPGGEPAATAATGAPASTQP. Polar residues predominate over residues 316 to 332; that stretch reads PSQSPHGDVQDSASHSD. Residues 468–488 traverse the membrane as a helical segment; sequence IAWVIVAISVPISSCSVLLTV. The interaction with CYFIP2 stretch occupies residues 489-574; that stretch reads CCMRRKKKTA…FVGNDQVSEI (86 aa).

Interacts with DST (isoform 1). Interacts with SH3GL2. Interacts (via N-terminus) with CYFIP1 and CYFIP2; the interactions associate TMEM108 with the WAVE1 complex. Glycosylated. In terms of tissue distribution, expressed in the nervous system tissues, such as hippocampus and spinal cord, is barely detectable in peripheral tissues such as heart, lung, liver, kidney and muscle. In brain, highly expressed in dentate gyrus neurons and expressed in cortex, olfactory bulb, ammon's horn, cerebellum, hypothalamus and striatum.

Its subcellular location is the membrane. It localises to the postsynaptic density. The protein localises to the endosome membrane. It is found in the cell projection. The protein resides in the axon. Its subcellular location is the dendrite. It localises to the early endosome. In terms of biological role, transmembrane protein required for proper cognitive functions. Involved in the development of dentate gyrus (DG) neuron circuitry, is necessary for AMPA receptors surface expression and proper excitatory postsynaptic currents of DG granule neurons. Regulates the organization and stability of the microtubule network of sensory neurons to allow axonal transport. Through the interaction with DST, mediates the docking of the dynein/dynactin motor complex to vesicle cargos for retrograde axonal transport. In hippocampal neurons, required for BDNF-dependent dendrite outgrowth. Cooperates with SH3GL2 and recruits the WAVE1 complex to facilitate actin-dependent BDNF:NTRK2 early endocytic trafficking and mediate signaling from early endosomes. The chain is Transmembrane protein 108 from Mus musculus (Mouse).